We begin with the raw amino-acid sequence, 1097 residues long: FHIP family protein GK23746 (1097 aa).

A compositionally biased stretch (polar residues) spans 1–21 (MSWLRSSPLRQSLTRTTSSGN). Residues 1-25 (MSWLRSSPLRQSLTRTTSSGNGIRP) form a disordered region. Position 491 is a phosphoserine (S491). Disordered stretches follow at residues 639-684 (DVSA…SGRR), 820-856 (NENSPLHQQQSLQHPHHLQPLPAPQQTGAGAQQRSAY), and 932-1042 (NNQQ…SEPV). Over residues 641–654 (SASSGNGTGSVVVG) the composition is skewed to low complexity. The residue at position 823 (S823) is a Phosphoserine. Composition is skewed to low complexity over residues 824 to 852 (PLHQQQSLQHPHHLQPLPAPQQTGAGAQQ) and 932 to 948 (NNQQSSNQTHLNSSSSS). A compositionally biased stretch (polar residues) spans 949-962 (AVTTCETSLSTQPH). Positions 973 to 985 (TTSSTISTSSGTT) are enriched in low complexity. A compositionally biased stretch (gly residues) spans 986–995 (AGSGGGGGSG). Low complexity-rich tracts occupy residues 996–1006 (SNSSFSIGGST) and 1013–1022 (SNNTTNSSST).

The protein belongs to the FHIP family.

This is FHIP family protein GK23746 from Drosophila willistoni (Fruit fly).